We begin with the raw amino-acid sequence, 421 residues long: Testin (421 aa).

Residues 92–199 enclose the PET domain; it reads MILTNPVAAK…GDVKLPCEMD (108 aa). The tract at residues 133 to 164 is disordered; sequence EKQPVAGSEGAQYRKKQLAKQLPAHDQDPSKC. Basic and acidic residues predominate over residues 155–164; sequence PAHDQDPSKC. LIM zinc-binding domains lie at 234-297, 299-359, and 362-421; these read YSCY…CDSE, PRCA…NHAV, and QGCH…KMMS.

Belongs to the prickle / espinas / testin family. In terms of assembly, interacts via LIM domain 1 with ZYX. Interacts (via LIM domain 3) with ENAH and VASP. Interacts with ALKBH4, talin, actin, alpha-actinin, GRIP1 and PXN. Interacts (via LIM domain 2) with ACTL7A (via N-terminus). Heterodimer with ACTL7A; the heterodimer interacts with ENAH to form a heterotrimer.

It localises to the cytoplasm. It is found in the cell junction. Its subcellular location is the focal adhesion. Functionally, scaffold protein that may play a role in cell adhesion, cell spreading and in the reorganization of the actin cytoskeleton. Plays a role in the regulation of cell proliferation. May act as a tumor suppressor. The protein is Testin (TES) of Callithrix jacchus (White-tufted-ear marmoset).